Consider the following 370-residue polypeptide: 4-hydroxy-3-methylbut-2-en-1-yl diphosphate synthase (flavodoxin) (370 aa).

C270, C273, C305, and E312 together coordinate [4Fe-4S] cluster.

This sequence belongs to the IspG family. It depends on [4Fe-4S] cluster as a cofactor.

It carries out the reaction (2E)-4-hydroxy-3-methylbut-2-enyl diphosphate + oxidized [flavodoxin] + H2O + 2 H(+) = 2-C-methyl-D-erythritol 2,4-cyclic diphosphate + reduced [flavodoxin]. Its pathway is isoprenoid biosynthesis; isopentenyl diphosphate biosynthesis via DXP pathway; isopentenyl diphosphate from 1-deoxy-D-xylulose 5-phosphate: step 5/6. Its function is as follows. Converts 2C-methyl-D-erythritol 2,4-cyclodiphosphate (ME-2,4cPP) into 1-hydroxy-2-methyl-2-(E)-butenyl 4-diphosphate. The chain is 4-hydroxy-3-methylbut-2-en-1-yl diphosphate synthase (flavodoxin) from Ectopseudomonas mendocina (strain ymp) (Pseudomonas mendocina).